Here is a 252-residue protein sequence, read N- to C-terminus: Acetoacetate decarboxylase (252 aa).

Lysine 116 acts as the Schiff-base intermediate with acetoacetate in catalysis.

Belongs to the ADC family.

The catalysed reaction is acetoacetate + H(+) = acetone + CO2. Catalyzes the conversion of acetoacetate to acetone and carbon dioxide. In Paraburkholderia phytofirmans (strain DSM 17436 / LMG 22146 / PsJN) (Burkholderia phytofirmans), this protein is Acetoacetate decarboxylase.